We begin with the raw amino-acid sequence, 555 residues long: Phosphomethylpyrimidine synthase (555 aa).

Residues asparagine 191, methionine 220, tyrosine 249, histidine 285, serine 305–glycine 307, aspartate 346–arginine 349, and glutamate 385 each bind substrate. Histidine 389 serves as a coordination point for Zn(2+). Tyrosine 412 provides a ligand contact to substrate. Zn(2+) is bound at residue histidine 453. Positions 533, 536, and 541 each coordinate [4Fe-4S] cluster.

The protein belongs to the ThiC family. In terms of assembly, homodimer. [4Fe-4S] cluster serves as cofactor.

It carries out the reaction 5-amino-1-(5-phospho-beta-D-ribosyl)imidazole + S-adenosyl-L-methionine = 4-amino-2-methyl-5-(phosphooxymethyl)pyrimidine + CO + 5'-deoxyadenosine + formate + L-methionine + 3 H(+). Its pathway is cofactor biosynthesis; thiamine diphosphate biosynthesis. Functionally, catalyzes the synthesis of the hydroxymethylpyrimidine phosphate (HMP-P) moiety of thiamine from aminoimidazole ribotide (AIR) in a radical S-adenosyl-L-methionine (SAM)-dependent reaction. In Ehrlichia ruminantium (strain Gardel), this protein is Phosphomethylpyrimidine synthase.